Reading from the N-terminus, the 436-residue chain is Tol-Pal system protein TolB (436 aa).

Residues 1 to 28 form the signal peptide; the sequence is MMKCSFFRAILVAVGLMAAAVVATPANA.

Belongs to the TolB family. As to quaternary structure, the Tol-Pal system is composed of five core proteins: the inner membrane proteins TolA, TolQ and TolR, the periplasmic protein TolB and the outer membrane protein Pal. They form a network linking the inner and outer membranes and the peptidoglycan layer.

The protein resides in the periplasm. In terms of biological role, part of the Tol-Pal system, which plays a role in outer membrane invagination during cell division and is important for maintaining outer membrane integrity. This is Tol-Pal system protein TolB from Rhizobium etli (strain CIAT 652).